The sequence spans 264 residues: S-adenosylmethionine decarboxylase proenzyme (264 aa).

Ser-111 acts as the Schiff-base intermediate with substrate; via pyruvic acid in catalysis. Pyruvic acid (Ser); by autocatalysis is present on Ser-111. His-116 (proton acceptor; for processing activity) is an active-site residue. The active-site Proton donor; for catalytic activity is Cys-139.

This sequence belongs to the prokaryotic AdoMetDC family. Type 2 subfamily. Heterooctamer of four alpha and four beta chains arranged as a tetramer of alpha/beta heterodimers. Requires pyruvate as cofactor. Post-translationally, is synthesized initially as an inactive proenzyme. Formation of the active enzyme involves a self-maturation process in which the active site pyruvoyl group is generated from an internal serine residue via an autocatalytic post-translational modification. Two non-identical subunits are generated from the proenzyme in this reaction, and the pyruvate is formed at the N-terminus of the alpha chain, which is derived from the carboxyl end of the proenzyme. The post-translation cleavage follows an unusual pathway, termed non-hydrolytic serinolysis, in which the side chain hydroxyl group of the serine supplies its oxygen atom to form the C-terminus of the beta chain, while the remainder of the serine residue undergoes an oxidative deamination to produce ammonia and the pyruvoyl group blocking the N-terminus of the alpha chain.

It carries out the reaction S-adenosyl-L-methionine + H(+) = S-adenosyl 3-(methylsulfanyl)propylamine + CO2. It participates in amine and polyamine biosynthesis; S-adenosylmethioninamine biosynthesis; S-adenosylmethioninamine from S-adenosyl-L-methionine: step 1/1. Functionally, catalyzes the decarboxylation of S-adenosylmethionine to S-adenosylmethioninamine (dcAdoMet), the propylamine donor required for the synthesis of the polyamines spermine and spermidine from the diamine putrescine. This Geobacillus kaustophilus (strain HTA426) protein is S-adenosylmethionine decarboxylase proenzyme.